We begin with the raw amino-acid sequence, 241 residues long: MFLNSLLTNFAALEVGQHLYWQIGNIRLHGQVFLTSWILLGALLVFISLGTKKMENDPKGLQNLLEFLWDYIRDLARTQIGEKVYRDWMPFIGTLFLFVFVSNWGGALIPWRLIKLPSGELGAPTADINTTIALALLVSLSYFYAGLSNKGWRYFEYYVHPTPIMLPFKILEDFTKPLSLSFRLFGNILADELVVGVLVFLVPLILPIPVMFLGLFTSAIQALIFATLAAYYIGEAVEEHH.

5 helical membrane-spanning segments follow: residues 30-50 (GQVF…ISLG), 91-111 (FIGT…LIPW), 128-148 (INTT…AGLS), 193-213 (LVVG…VMFL), and 214-234 (GLFT…YYIG).

It belongs to the ATPase A chain family. F-type ATPases have 2 components, CF(1) - the catalytic core - and CF(0) - the membrane proton channel. CF(1) has five subunits: alpha(3), beta(3), gamma(1), delta(1), epsilon(1). CF(0) has four main subunits: a, b, b' and c.

Its subcellular location is the cellular thylakoid membrane. Key component of the proton channel; it plays a direct role in the translocation of protons across the membrane. In Prochlorococcus marinus (strain MIT 9215), this protein is ATP synthase subunit a.